A 253-amino-acid chain; its full sequence is Anamorsin homolog (253 aa).

Residues 4–129 (FKGLQKSLYI…ETGSSARLSF (126 aa)) are N-terminal SAM-like domain. The tract at residues 130-161 (AKKNSSTLNVWKISGDDDELIDEEDLLDEVDK) is linker. The [2Fe-2S] cluster site is built by C172, C181, C184, and C186. A fe-S binding site A region spans residues 172 to 186 (CSTTGKRKACKNCSC). 4 residues coordinate [4Fe-4S] cluster: C214, C217, C225, and C228. 2 consecutive short sequence motifs (cx2C motif) follow at residues 214–217 (CGNC) and 225–228 (CSSC). Residues 214-228 (CGNCYLGDAFRCSSC) form a fe-S binding site B region.

It belongs to the anamorsin family. As to quaternary structure, monomer. [2Fe-2S] cluster is required as a cofactor. The cofactor is [4Fe-4S] cluster.

Its subcellular location is the cytoplasm. The protein localises to the mitochondrion intermembrane space. Its function is as follows. Component of the cytosolic iron-sulfur (Fe-S) protein assembly (CIA) machinery. Required for the maturation of extramitochondrial Fe-S proteins. Part of an electron transfer chain functioning in an early step of cytosolic Fe-S biogenesis, facilitating the de novo assembly of a [4Fe-4S] cluster on the cytosolic Fe-S scaffold complex. Electrons are transferred from NADPH via a FAD- and FMN-containing diflavin oxidoreductase. Together with the diflavin oxidoreductase, also required for the assembly of the diferric tyrosyl radical cofactor of ribonucleotide reductase (RNR), probably by providing electrons for reduction during radical cofactor maturation in the catalytic small subunit. The sequence is that of Anamorsin homolog from Drosophila willistoni (Fruit fly).